Here is a 564-residue protein sequence, read N- to C-terminus: MDIKPVILNPRSKNITEGKSRAPNRSMYYAMGYEADDFKKPMIGVANGHSTITPCNSGLQKLADAAIAAIEEAGGNAQVFGTPTISDGMSMGTEGMKYSLVSREVISDCIETCVQGQWMDGVLVIGGCDKNMPGGLMGMLRANVPAIYVYGGTILPGHYKGQDLNIVSVFEAVGENAAGRMSDEDLLEIERRAIPGPGSCGGMYTANTMSSAFEALGISLVYSSTMANPHDEKLNSAQESAKVLIEAIKNDLKPRDIVTRKSIENAIAVVMAIGGSTNAVLHFLAIAHAAGVEWTIDDFERVRQKTPVLCDLKPSGKYLAVDLHRAGGIPQVMKMLLSAGLLHGDCITITGQTVAEVLKDVPDAPRADQNVIRPMNKPMYAQGHLAILKGNLAPEGCVAKITGLKNPVMTGPARVFEDEQSALAAILANKIVAGDVMVLRYLGPKGGPGMPEMLAPTGALVGQGLGESVGLITDGRFSGGTWGMVVGHVAPEAAAGGLIALIEEGDSITIDAHQLLLQLNVSDDIIAKRRSVWTAPQPRYTRGVQAKFAFNASTASKGAVLDNY.

Cys55 is a binding site for [2Fe-2S] cluster. Asp87 contacts Mg(2+). Cys128 contacts [2Fe-2S] cluster. Mg(2+) is bound by residues Asp129 and Lys130. N6-carboxylysine is present on Lys130. Cys200 serves as a coordination point for [2Fe-2S] cluster. Glu452 contributes to the Mg(2+) binding site. Ser478 acts as the Proton acceptor in catalysis.

Belongs to the IlvD/Edd family. In terms of assembly, homodimer. [2Fe-2S] cluster serves as cofactor. It depends on Mg(2+) as a cofactor.

It carries out the reaction (2R)-2,3-dihydroxy-3-methylbutanoate = 3-methyl-2-oxobutanoate + H2O. It catalyses the reaction (2R,3R)-2,3-dihydroxy-3-methylpentanoate = (S)-3-methyl-2-oxopentanoate + H2O. The protein operates within amino-acid biosynthesis; L-isoleucine biosynthesis; L-isoleucine from 2-oxobutanoate: step 3/4. Its pathway is amino-acid biosynthesis; L-valine biosynthesis; L-valine from pyruvate: step 3/4. In terms of biological role, functions in the biosynthesis of branched-chain amino acids. Catalyzes the dehydration of (2R,3R)-2,3-dihydroxy-3-methylpentanoate (2,3-dihydroxy-3-methylvalerate) into 2-oxo-3-methylpentanoate (2-oxo-3-methylvalerate) and of (2R)-2,3-dihydroxy-3-methylbutanoate (2,3-dihydroxyisovalerate) into 2-oxo-3-methylbutanoate (2-oxoisovalerate), the penultimate precursor to L-isoleucine and L-valine, respectively. The polypeptide is Dihydroxy-acid dehydratase (Albidiferax ferrireducens (strain ATCC BAA-621 / DSM 15236 / T118) (Rhodoferax ferrireducens)).